Consider the following 1236-residue polypeptide: ABC transporter B family member 9 (1236 aa).

Positions 33–320 (MTVGTIAAAG…TSPSLNAFAA (288 aa)) constitute an ABC transmembrane type-1 1 domain. 6 helical membrane-spanning segments follow: residues 38-58 (IAAA…GQLI), 80-100 (FIYL…CWMV), 158-178 (QLLC…PLLA), 179-199 (GVLC…SLIM), 257-277 (ISGF…GLAV), and 288-308 (GYNG…GMSL). The region spanning 355–591 (IELKDVYFRY…PEGAYSQLVR (237 aa)) is the ABC transporter 1 domain. 390-397 (GQSGSGKS) provides a ligand contact to ATP. N-linked (GlcNAc...) asparagine glycosylation occurs at Asn542. Positions 593–616 (QEGSKEEATESERPETSLDVERSG) are disordered. Residues 594 to 616 (EGSKEEATESERPETSLDVERSG) show a composition bias toward basic and acidic residues. Asn631 and Asn653 each carry an N-linked (GlcNAc...) asparagine glycan. The next 6 membrane-spanning stretches (helical) occupy residues 685–705 (VLVL…IFGL), 725–745 (SHFW…MIPV), 785–805 (SLVG…TTGL), 806–826 (IIAF…SPFI), 902–922 (FSFF…AGLI), and 927–947 (ATFG…IGVS). Positions 686–958 (LVLGSIAAMV…TSAMAPDSNK (273 aa)) constitute an ABC transmembrane type-1 2 domain. Positions 993–1230 (IEFRHVSFRY…SGGAYASLVT (238 aa)) constitute an ABC transporter 2 domain. 1028–1035 (GESGSGKS) is a binding site for ATP. 2 N-linked (GlcNAc...) asparagine glycosylation sites follow: Asn1082 and Asn1181.

This sequence belongs to the ABC transporter superfamily. ABCB family. Multidrug resistance exporter (TC 3.A.1.201) subfamily.

Its subcellular location is the membrane. This is ABC transporter B family member 9 (ABCB9) from Arabidopsis thaliana (Mouse-ear cress).